Consider the following 665-residue polypeptide: Macrolide export ATP-binding/permease protein MacB (665 aa).

The ABC transporter domain maps to Met17–Lys255. ATP is bound at residue Gly53 to Ser60. A run of 4 helical transmembrane segments spans residues Leu287 to Gly307, Ile544 to Val564, Phe588 to Phe608, and Ser630 to Ala650.

This sequence belongs to the ABC transporter superfamily. Macrolide exporter (TC 3.A.1.122) family. Homodimer. Part of the tripartite efflux system MacAB-TolC, which is composed of an inner membrane transporter, MacB, a periplasmic membrane fusion protein, MacA, and an outer membrane component, TolC. The complex forms a large protein conduit and can translocate molecules across both the inner and outer membranes. Interacts with MacA.

The protein localises to the cell inner membrane. In terms of biological role, part of the tripartite efflux system MacAB-TolC. MacB is a non-canonical ABC transporter that contains transmembrane domains (TMD), which form a pore in the inner membrane, and an ATP-binding domain (NBD), which is responsible for energy generation. Confers resistance against macrolides. The polypeptide is Macrolide export ATP-binding/permease protein MacB (Psychrobacter cryohalolentis (strain ATCC BAA-1226 / DSM 17306 / VKM B-2378 / K5)).